The primary structure comprises 654 residues: MICOS complex subunit MIC60-2 (654 aa).

The N-terminal 12 residues, 1–12 (MRGSRNLLTQRL), are a transit peptide targeting the mitochondrion. Topologically, residues 13–20 (ASSRATGS) are mitochondrial matrix. The chain crosses the membrane as a helical span at residues 21-43 (SGGLKFVGATVGAVTAGAAGVAG). At 44–654 (YASYDNEFRK…AALTSIRSTY (611 aa)) the chain is on the mitochondrial intermembrane side. Basic and acidic residues predominate over residues 115 to 129 (LKETTEPKKIEKKPE). Residues 115 to 140 (LKETTEPKKIEKKPENPYIGAKTPLN) form a disordered region.

It belongs to the MICOS complex subunit Mic60 family. Component of the mitochondrial contact site and cristae organizing system (MICOS) complex. As to expression, expressed in the gonads and muscle cells.

The protein localises to the mitochondrion inner membrane. The protein resides in the cytoplasm. Functionally, sustains mitochondrial morphology probably through maintaining cristae morphology. May act as a component of the MICOS complex, a large protein complex of the mitochondria. This chain is MICOS complex subunit MIC60-2, found in Caenorhabditis elegans.